We begin with the raw amino-acid sequence, 461 residues long: MEFDTIAAISTPMGEGAIAIVRLSGDEAVAIADKIFKSPGGKSLTTKDSHTIHYGHLVDPKTNEVVEEVMLSLMRGPKTFTREDVVEINCHGGLVSVNRVLQLALTNGARLAEPGEFTKRAFLNGRIDLSQAEAVMDLIRAKTDRAMNVALGQMDGKLSRLIGDLRQALLETLAQVEVNIDYPEYDDVEEMTVPVLVEKCTWVRDEIIKLLQTSSQGKILREGLSTVILGRPNVGKSSLLNSLVQENKAIVTDIAGTTRDIIEEYVNVRGVPLRLVDTAGIRETEDIVERIGVERSREALRGADLILFVLNYADELTAEDERLFETIEAMDYIVIINKTDLPQKINLARVKELAGKHRIVTTSLLQEEGVTELEEAIAALFFEGQIEAGDLTYVSNARHIALLHQAQATVEDAIAAAQAGVPVDMVQIDVTRTWELLGEIIGDTVQESLINQLFSQFCLGK.

(6S)-5-formyl-5,6,7,8-tetrahydrofolate-binding residues include arginine 22, glutamate 87, and arginine 126. In terms of domain architecture, TrmE-type G spans 223 to 382 (GLSTVILGRP…LEEAIAALFF (160 aa)). Asparagine 233 is a binding site for K(+). Residues 233–238 (NVGKSS), 252–258 (TDIAGTT), and 277–280 (DTAG) each bind GTP. Residue serine 237 coordinates Mg(2+). The K(+) site is built by threonine 252, isoleucine 254, and threonine 257. Threonine 258 contributes to the Mg(2+) binding site. Lysine 461 provides a ligand contact to (6S)-5-formyl-5,6,7,8-tetrahydrofolate.

It belongs to the TRAFAC class TrmE-Era-EngA-EngB-Septin-like GTPase superfamily. TrmE GTPase family. As to quaternary structure, homodimer. Heterotetramer of two MnmE and two MnmG subunits. It depends on K(+) as a cofactor.

The protein resides in the cytoplasm. Exhibits a very high intrinsic GTPase hydrolysis rate. Involved in the addition of a carboxymethylaminomethyl (cmnm) group at the wobble position (U34) of certain tRNAs, forming tRNA-cmnm(5)s(2)U34. The chain is tRNA modification GTPase MnmE from Lysinibacillus sphaericus (strain C3-41).